A 209-amino-acid polypeptide reads, in one-letter code: Somatotropin (209 aa).

The first 22 residues, 1–22 (MGQVFLLMPVLLVAGYLSLGAA), serve as a signal peptide directing secretion. His38 serves as a coordination point for Zn(2+). A disulfide bridge connects residues Cys71 and Cys182. Position 191 (Glu191) interacts with Zn(2+). Cys199 and Cys207 are joined by a disulfide.

It belongs to the somatotropin/prolactin family.

The protein localises to the secreted. Functionally, growth hormone plays an important role in growth control and is involved in the regulation of several anabolic processes. Implicated as an osmoregulatory substance important for seawater adaptation. This is Somatotropin (gh) from Esox lucius (Northern pike).